The primary structure comprises 207 residues: Alpha-1-acid glycoprotein 2 (207 aa).

The first 18 residues, 1–18 (MALHMILVMVSLLPLLEA), serve as a signal peptide directing secretion. Gln-19 carries the post-translational modification Pyrrolidone carboxylic acid. Asn-25, Asn-34, Asn-76, Asn-94, and Asn-104 each carry an N-linked (GlcNAc...) asparagine glycan. A disulfide bridge links Cys-91 with Cys-184. Positions 188–207 (EKQQLELEKETKKDPEEGQA) are disordered.

This sequence belongs to the calycin superfamily. Lipocalin family. Expressed by the liver and secreted in plasma.

Its subcellular location is the secreted. Its function is as follows. Functions as a transport protein in the blood stream. Binds various ligands in the interior of its beta-barrel domain. Appears to function in modulating the activity of the immune system during the acute-phase reaction. In Mus musculus (Mouse), this protein is Alpha-1-acid glycoprotein 2 (Orm2).